The sequence spans 469 residues: UDP-N-acetylmuramate--L-alanine ligase (469 aa).

114–120 (GTHGKTT) contributes to the ATP binding site.

This sequence belongs to the MurCDEF family.

The protein localises to the cytoplasm. The catalysed reaction is UDP-N-acetyl-alpha-D-muramate + L-alanine + ATP = UDP-N-acetyl-alpha-D-muramoyl-L-alanine + ADP + phosphate + H(+). The protein operates within cell wall biogenesis; peptidoglycan biosynthesis. Cell wall formation. This is UDP-N-acetylmuramate--L-alanine ligase from Sinorhizobium fredii (strain NBRC 101917 / NGR234).